The following is a 200-amino-acid chain: dITP/XTP pyrophosphatase (200 aa).

8–13 (SQNSSK) is a substrate binding site. Mg(2+) is bound by residues glutamate 40 and aspartate 69. Aspartate 69 functions as the Proton acceptor in the catalytic mechanism. Residues serine 70, 154–157 (FGYD), lysine 177, and 182–183 (HR) contribute to the substrate site.

The protein belongs to the HAM1 NTPase family. Homodimer. Requires Mg(2+) as cofactor.

The enzyme catalyses XTP + H2O = XMP + diphosphate + H(+). The catalysed reaction is dITP + H2O = dIMP + diphosphate + H(+). It catalyses the reaction ITP + H2O = IMP + diphosphate + H(+). Its function is as follows. Pyrophosphatase that catalyzes the hydrolysis of nucleoside triphosphates to their monophosphate derivatives, with a high preference for the non-canonical purine nucleotides XTP (xanthosine triphosphate), dITP (deoxyinosine triphosphate) and ITP. Seems to function as a house-cleaning enzyme that removes non-canonical purine nucleotides from the nucleotide pool, thus preventing their incorporation into DNA/RNA and avoiding chromosomal lesions. The protein is dITP/XTP pyrophosphatase of Coxiella burnetii (strain RSA 493 / Nine Mile phase I).